We begin with the raw amino-acid sequence, 512 residues long: 2,3-bisphosphoglycerate-independent phosphoglycerate mutase (512 aa).

Residues Asp18 and Ser68 each contribute to the Mn(2+) site. The active-site Phosphoserine intermediate is Ser68. Substrate is bound by residues His129, Arg159 to Asp160, Arg191, Arg197, Arg265 to Arg268, and Lys338. The Mn(2+) site is built by Asp403, His407, Asp444, His445, and His462.

This sequence belongs to the BPG-independent phosphoglycerate mutase family. As to quaternary structure, monomer. Mn(2+) is required as a cofactor.

The catalysed reaction is (2R)-2-phosphoglycerate = (2R)-3-phosphoglycerate. The protein operates within carbohydrate degradation; glycolysis; pyruvate from D-glyceraldehyde 3-phosphate: step 3/5. Catalyzes the interconversion of 2-phosphoglycerate and 3-phosphoglycerate. This chain is 2,3-bisphosphoglycerate-independent phosphoglycerate mutase, found in Mesomycoplasma hyopneumoniae (strain 232) (Mycoplasma hyopneumoniae).